A 243-amino-acid chain; its full sequence is Carboxy-S-adenosyl-L-methionine synthase (243 aa).

S-adenosyl-L-methionine contacts are provided by residues Tyr40, 65–67, 90–91, 118–119, Asn133, and Arg200; these read GCS, DN, and DI.

Belongs to the class I-like SAM-binding methyltransferase superfamily. Cx-SAM synthase family. As to quaternary structure, homodimer.

It carries out the reaction prephenate + S-adenosyl-L-methionine = carboxy-S-adenosyl-L-methionine + 3-phenylpyruvate + H2O. Catalyzes the conversion of S-adenosyl-L-methionine (SAM) to carboxy-S-adenosyl-L-methionine (Cx-SAM). This Shewanella baltica (strain OS155 / ATCC BAA-1091) protein is Carboxy-S-adenosyl-L-methionine synthase.